The primary structure comprises 873 residues: Calmodulin-dependent glutamylase SidJ (873 aa).

The disordered stretch occupies residues 16–90 (QSEDNPSETA…TTSTTKQKGP (75 aa)). The span at 22 to 58 (SETAVETTDVSTKIKTTDTTQEESSVKTKTVVPTQPG) shows a compositional bias: polar residues. The Mg(2+) site is built by Asp542 and Asp545. The segment at 851 to 873 (NLSEKSDIDSEKPESERTTDKRL) is disordered.

In terms of assembly, interacts with host calmodulin/CALM1; this interaction is required for glutamylase activity. Mg(2+) serves as cofactor.

The enzyme catalyses L-glutamyl-[protein] + L-glutamate + ATP = gamma-L-glutamyl-L-glutamyl-[protein] + ADP + phosphate + H(+). The catalysed reaction is (L-glutamyl)(n)-gamma-L-glutamyl-L-glutamyl-[protein] + L-glutamate + ATP = (L-glutamyl)(n+1)-gamma-L-glutamyl-L-glutamyl-[protein] + ADP + phosphate + H(+). Its activity is regulated as follows. Glytamylation catalyzed by SidJ requires host calmodulin and can be regulated by intracellular changes in Ca2+ concentrations. Also requires ATP. In terms of biological role, glutamylase that mediates the covalent attachment of glutamate moieties to SdeA on one of the catalytic residues that is required for its mono-ADP-ribosyltransferase activity. In turn, inhibits SdeA ubiquitinating activity. Also glutamylates related SdeB, SdeC and SidE. Glutamylase activity only occurs in the host since it requires host calmodulin. May also reverse the SdeA-mediated substrate ubiquitination by cleaving the phosphodiester bond that links phosphoribosylated ubiquitin to protein substrates via its deubiquitinase activity. The protein is Calmodulin-dependent glutamylase SidJ of Legionella pneumophila subsp. pneumophila (strain Philadelphia 1 / ATCC 33152 / DSM 7513).